The primary structure comprises 136 residues: Plastocyanin (136 aa).

Positions 1-34 (MSLVFNLVKRLQLILLSLVVGGLAVAFLSNPAAA) are cleaved as a signal peptide. The 102-residue stretch at 35–136 (ETYIVKMGSD…GMVGKIIVNG (102 aa)) folds into the Plastocyanin-like domain. 4 residues coordinate Cu cation: His-73, Cys-120, His-123, and Met-128.

It belongs to the plastocyanin family. The cofactor is Cu(2+).

Its subcellular location is the cellular thylakoid membrane. In terms of biological role, participates in electron transfer between P700 and the cytochrome b6-f complex in photosystem I. This is Plastocyanin from Synechococcus sp. (strain JA-2-3B'a(2-13)) (Cyanobacteria bacterium Yellowstone B-Prime).